The following is a 140-amino-acid chain: Large-conductance mechanosensitive channel 2 (140 aa).

The next 3 membrane-spanning stretches (helical) occupy residues 8–28, 30–50, and 81–101; these read FISKGNVMDLAVGVIIGAAFG, IVDSLVNDIIMPVIGAIFGGL, and GSFITVALNFVILAFIIFLMV.

Belongs to the MscL family. In terms of assembly, homopentamer.

It is found in the cell inner membrane. Functionally, channel that opens in response to stretch forces in the membrane lipid bilayer. May participate in the regulation of osmotic pressure changes within the cell. The chain is Large-conductance mechanosensitive channel 2 from Mesorhizobium japonicum (strain LMG 29417 / CECT 9101 / MAFF 303099) (Mesorhizobium loti (strain MAFF 303099)).